Reading from the N-terminus, the 130-residue chain is Large ribosomal subunit protein bL12 (130 aa).

Belongs to the bacterial ribosomal protein bL12 family. As to quaternary structure, homodimer. Part of the ribosomal stalk of the 50S ribosomal subunit. Forms a multimeric L10(L12)X complex, where L10 forms an elongated spine to which 2 to 4 L12 dimers bind in a sequential fashion. Binds GTP-bound translation factors.

In terms of biological role, forms part of the ribosomal stalk which helps the ribosome interact with GTP-bound translation factors. Is thus essential for accurate translation. This Nostoc punctiforme (strain ATCC 29133 / PCC 73102) protein is Large ribosomal subunit protein bL12.